A 37-amino-acid polypeptide reads, in one-letter code: Esculentin-2Rb (37 aa).

Residues cysteine 31 and cysteine 37 are joined by a disulfide bond.

In terms of tissue distribution, expressed by the skin glands.

It localises to the secreted. Its function is as follows. Antimicrobial peptide. The chain is Esculentin-2Rb from Pelophylax ridibundus (Marsh frog).